A 125-amino-acid chain; its full sequence is Histone H2A, orphon (125 aa).

The segment covering 1-18 (MSGRGKGGKVKAKAKSRS) has biased composition (basic residues). The segment at 1–21 (MSGRGKGGKVKAKAKSRSSRA) is disordered. Position 2 is an N-acetylserine (S2). Phosphoserine is present on S2. K119 participates in a covalent cross-link: Glycyl lysine isopeptide (Lys-Gly) (interchain with G-Cter in ubiquitin).

It belongs to the histone H2A family. The nucleosome is a histone octamer containing two molecules each of H2A, H2B, H3 and H4 assembled in one H3-H4 heterotetramer and two H2A-H2B heterodimers. The octamer wraps approximately 147 bp of DNA. Post-translationally, monoubiquitination of Lys-119 gives a specific tag for epigenetic transcriptional repression. Phosphorylation on Ser-2 is enhanced during mitosis. Phosphorylation on Ser-2 directly represses transcription.

Its subcellular location is the nucleus. The protein localises to the chromosome. Functionally, core component of nucleosome. Nucleosomes wrap and compact DNA into chromatin, limiting DNA accessibility to the cellular machineries which require DNA as a template. Histones thereby play a central role in transcription regulation, DNA repair, DNA replication and chromosomal stability. DNA accessibility is regulated via a complex set of post-translational modifications of histones, also called histone code, and nucleosome remodeling. In Chironomus thummi thummi (Midge), this protein is Histone H2A, orphon.